The chain runs to 182 residues: ATP-dependent protease subunit HslV (182 aa).

T6 is an active-site residue. A164, C167, and T170 together coordinate Na(+).

This sequence belongs to the peptidase T1B family. HslV subfamily. In terms of assembly, a double ring-shaped homohexamer of HslV is capped on each side by a ring-shaped HslU homohexamer. The assembly of the HslU/HslV complex is dependent on binding of ATP.

It localises to the cytoplasm. It catalyses the reaction ATP-dependent cleavage of peptide bonds with broad specificity.. Its activity is regulated as follows. Allosterically activated by HslU binding. Its function is as follows. Protease subunit of a proteasome-like degradation complex believed to be a general protein degrading machinery. This chain is ATP-dependent protease subunit HslV, found in Borreliella burgdorferi (strain ATCC 35210 / DSM 4680 / CIP 102532 / B31) (Borrelia burgdorferi).